The following is an 87-amino-acid chain: MVEKMNEQIYIIPLRDVKRSPRWKRSNTAMKDIRAFLAKHMKSEDVKLDASINEKVWERGSEKPPRKIRVRAMKFDDGQVQAELAQE.

This sequence belongs to the eukaryotic ribosomal protein eL31 family.

This is Large ribosomal subunit protein eL31 from Methanosphaerula palustris (strain ATCC BAA-1556 / DSM 19958 / E1-9c).